The sequence spans 321 residues: tRNA(Ile)-lysidine synthase (321 aa).

21–26 (SYGSDS) serves as a coordination point for ATP.

Belongs to the tRNA(Ile)-lysidine synthase family.

The protein localises to the cytoplasm. It catalyses the reaction cytidine(34) in tRNA(Ile2) + L-lysine + ATP = lysidine(34) in tRNA(Ile2) + AMP + diphosphate + H(+). Ligates lysine onto the cytidine present at position 34 of the AUA codon-specific tRNA(Ile) that contains the anticodon CAU, in an ATP-dependent manner. Cytidine is converted to lysidine, thus changing the amino acid specificity of the tRNA from methionine to isoleucine. In Campylobacter jejuni subsp. jejuni serotype O:2 (strain ATCC 700819 / NCTC 11168), this protein is tRNA(Ile)-lysidine synthase.